Consider the following 360-residue polypeptide: DNA replication and repair protein RecF (360 aa).

An ATP-binding site is contributed by 30 to 37 (GQNGSGKT).

Belongs to the RecF family.

It is found in the cytoplasm. Functionally, the RecF protein is involved in DNA metabolism; it is required for DNA replication and normal SOS inducibility. RecF binds preferentially to single-stranded, linear DNA. It also seems to bind ATP. This Shewanella loihica (strain ATCC BAA-1088 / PV-4) protein is DNA replication and repair protein RecF.